Consider the following 397-residue polypeptide: Succinate--CoA ligase [ADP-forming] subunit beta (397 aa).

The region spanning 9–254 (KALLKGYGAP…ETEEDAKEIE (246 aa)) is the ATP-grasp domain. ATP contacts are provided by residues Lys-46, 53 to 55 (GRG), Glu-109, Ala-112, and Glu-117. Mg(2+)-binding residues include Asn-209 and Asp-223. Substrate is bound by residues Asn-274 and 331 to 333 (GIM).

Belongs to the succinate/malate CoA ligase beta subunit family. Heterotetramer of two alpha and two beta subunits. It depends on Mg(2+) as a cofactor.

It catalyses the reaction succinate + ATP + CoA = succinyl-CoA + ADP + phosphate. It carries out the reaction GTP + succinate + CoA = succinyl-CoA + GDP + phosphate. It functions in the pathway carbohydrate metabolism; tricarboxylic acid cycle; succinate from succinyl-CoA (ligase route): step 1/1. Functionally, succinyl-CoA synthetase functions in the citric acid cycle (TCA), coupling the hydrolysis of succinyl-CoA to the synthesis of either ATP or GTP and thus represents the only step of substrate-level phosphorylation in the TCA. The beta subunit provides nucleotide specificity of the enzyme and binds the substrate succinate, while the binding sites for coenzyme A and phosphate are found in the alpha subunit. The sequence is that of Succinate--CoA ligase [ADP-forming] subunit beta from Agrobacterium fabrum (strain C58 / ATCC 33970) (Agrobacterium tumefaciens (strain C58)).